Reading from the N-terminus, the 220-residue chain is MSYSLKGLLKRPVHLFVKPPAVEGEYPARGELYYVKGSNGSGKSTVPSYLAENDPQAYVVTYNGKIMLTVCPSYNIICIGKYDKSKSKGVDSLKDTEQMLFALSIADQPEYLKYDVLFEGIIPSTLLSSWIPRLTRPPRELVVLFMDTPLETCVSRVKSRNGGADFNESLVVEKWERVHDHSQRHKGLFPTVPAGMMKSNGLTIEQAVFAFLNRDFGSID.

Belongs to the thymidylate kinase family. 5-hmdU DNA kinase subfamily.

It carries out the reaction 5-hydroxymethyl-dUMP in DNA + ATP = 5-phosphomethyl-dUMP in DNA + ADP + H(+). Its function is as follows. Phosphorylates 5-hydroxymethyluracil (5hmdU) into 5-phosphomethyl-2'-deoxyuridine (5- PmdU) on DNA as a step in the pathway leading to thymidine hypermodifications in the viral genome. The phosphate is added internally to the DNA polymer. As a final result of the pathway of hypermodification, 5-aminoethoxy-2'-deoxymethyluridine (5-NeOmdU) substitutes for about 40% of the thymidines in the viral DNA. These modifications probably prevent degradation of viral genome by the host restriction-modification antiviral defense system. The polypeptide is 5-hmdU DNA kinase 1 (Salmonella phage ViI).